Here is a 194-residue protein sequence, read N- to C-terminus: Early growth response protein 1 (194 aa).

3 consecutive C2H2-type zinc fingers follow at residues 1–18 (CDRR…IRIH), 24–46 (FQCR…IRTH), and 52–74 (FACD…TKIH).

Belongs to the EGR C2H2-type zinc-finger protein family.

The protein resides in the nucleus. Its subcellular location is the cytoplasm. In terms of biological role, transcriptional regulator. Recognizes and binds to the DNA sequence 5'-GCG(T/G)GGGCG-3'(EGR-site) in the promoter region of target genes. Binds double-stranded target DNA, irrespective of the cytosine methylation status. Regulates the transcription of numerous target genes, and thereby plays an important role in regulating the response to growth factors, DNA damage, and ischemia. Plays a role in the regulation of cell survival, proliferation and cell death. Mediates responses to ischemia and hypoxia; regulates the expression of proteins that are involved in inflammatory processes. Plays a role in regulating the expression of circadian clock genes. The protein is Early growth response protein 1 (EGR1) of Gallus gallus (Chicken).